The primary structure comprises 302 residues: 4-hydroxy-tetrahydrodipicolinate synthase (302 aa).

T50 is a pyruvate binding site. Y138 functions as the Proton donor/acceptor in the catalytic mechanism. K167 functions as the Schiff-base intermediate with substrate in the catalytic mechanism. A pyruvate-binding site is contributed by V209.

This sequence belongs to the DapA family. In terms of assembly, homotetramer; dimer of dimers.

Its subcellular location is the cytoplasm. It carries out the reaction L-aspartate 4-semialdehyde + pyruvate = (2S,4S)-4-hydroxy-2,3,4,5-tetrahydrodipicolinate + H2O + H(+). The protein operates within amino-acid biosynthesis; L-lysine biosynthesis via DAP pathway; (S)-tetrahydrodipicolinate from L-aspartate: step 3/4. Its function is as follows. Catalyzes the condensation of (S)-aspartate-beta-semialdehyde [(S)-ASA] and pyruvate to 4-hydroxy-tetrahydrodipicolinate (HTPA). The sequence is that of 4-hydroxy-tetrahydrodipicolinate synthase from Salinibacter ruber (strain DSM 13855 / M31).